We begin with the raw amino-acid sequence, 261 residues long: Cytochrome c oxidase subunit 3 (261 aa).

Topologically, residues 1-15 are mitochondrial matrix; it reads MTHQTHAYHMVNPSP. Residues 16-34 traverse the membrane as a helical segment; sequence WPLTGALSALLMTSGLAMW. Over 35 to 40 the chain is Mitochondrial intermembrane; that stretch reads FHYNSM. A helical membrane pass occupies residues 41 to 66; that stretch reads LLLTLGLMTNLLTMYQWWRDIVREST. The Mitochondrial matrix portion of the chain corresponds to 67–72; sequence FQGHHT. Residues 73 to 105 traverse the membrane as a helical segment; it reads LVVQKGLRYGMILFIISEVFFFSGFFWAFYHSS. At 106–128 the chain is on the mitochondrial intermembrane side; that stretch reads LAPTPELGGCWPPTGIHPLNPME. Residues 129–152 traverse the membrane as a helical segment; it reads VPLLNTSVLLASGVSITWAHHSLM. Residues 153–155 lie on the Mitochondrial matrix side of the membrane; sequence EGN. A helical membrane pass occupies residues 156 to 183; the sequence is RKHMLQALFITISLGVYFTLLQASEYYE. Residues 184–190 lie on the Mitochondrial intermembrane side of the membrane; that stretch reads APFTISD. Residues 191 to 223 traverse the membrane as a helical segment; that stretch reads GIYGSTFFVATGFHGLHVIIGSTFLIVCFLRQL. Over 224 to 232 the chain is Mitochondrial matrix; the sequence is KFHFTSNHH. The helical transmembrane segment at 233–256 threads the bilayer; the sequence is FGFEAAAWYWHFVDVVWLFLYVSI. The Mitochondrial intermembrane portion of the chain corresponds to 257–261; that stretch reads YWWGS.

The protein belongs to the cytochrome c oxidase subunit 3 family. Component of the cytochrome c oxidase (complex IV, CIV), a multisubunit enzyme composed of 14 subunits. The complex is composed of a catalytic core of 3 subunits MT-CO1, MT-CO2 and MT-CO3, encoded in the mitochondrial DNA, and 11 supernumerary subunits COX4I, COX5A, COX5B, COX6A, COX6B, COX6C, COX7A, COX7B, COX7C, COX8 and NDUFA4, which are encoded in the nuclear genome. The complex exists as a monomer or a dimer and forms supercomplexes (SCs) in the inner mitochondrial membrane with NADH-ubiquinone oxidoreductase (complex I, CI) and ubiquinol-cytochrome c oxidoreductase (cytochrome b-c1 complex, complex III, CIII), resulting in different assemblies (supercomplex SCI(1)III(2)IV(1) and megacomplex MCI(2)III(2)IV(2)).

It is found in the mitochondrion inner membrane. It catalyses the reaction 4 Fe(II)-[cytochrome c] + O2 + 8 H(+)(in) = 4 Fe(III)-[cytochrome c] + 2 H2O + 4 H(+)(out). In terms of biological role, component of the cytochrome c oxidase, the last enzyme in the mitochondrial electron transport chain which drives oxidative phosphorylation. The respiratory chain contains 3 multisubunit complexes succinate dehydrogenase (complex II, CII), ubiquinol-cytochrome c oxidoreductase (cytochrome b-c1 complex, complex III, CIII) and cytochrome c oxidase (complex IV, CIV), that cooperate to transfer electrons derived from NADH and succinate to molecular oxygen, creating an electrochemical gradient over the inner membrane that drives transmembrane transport and the ATP synthase. Cytochrome c oxidase is the component of the respiratory chain that catalyzes the reduction of oxygen to water. Electrons originating from reduced cytochrome c in the intermembrane space (IMS) are transferred via the dinuclear copper A center (CU(A)) of subunit 2 and heme A of subunit 1 to the active site in subunit 1, a binuclear center (BNC) formed by heme A3 and copper B (CU(B)). The BNC reduces molecular oxygen to 2 water molecules using 4 electrons from cytochrome c in the IMS and 4 protons from the mitochondrial matrix. This is Cytochrome c oxidase subunit 3 (MT-CO3) from Ceratotherium simum (White rhinoceros).